A 442-amino-acid chain; its full sequence is Cell cycle checkpoint control protein RAD9B (442 aa).

Disordered stretches follow at residues 370-392 (EVPESDGNLSEVPESSVSDTEDV) and 422-442 (QSLATASGSEEDMNNGSFSTF). Position 387 is a phosphoserine (serine 387).

It belongs to the rad9 family. In terms of assembly, interacts with HUS1, HUS1B, RAD1, RAD9A and RAD17.

This chain is Cell cycle checkpoint control protein RAD9B (RAD9B), found in Bos taurus (Bovine).